A 195-amino-acid polypeptide reads, in one-letter code: Interferon omega-1 (195 aa).

An N-terminal signal peptide occupies residues 1-23; the sequence is MAFVLSLLMALVLVSYGPGGSLG. 2 disulfides stabilise this stretch: C24–C122 and C52–C162.

This sequence belongs to the alpha/beta interferon family.

The protein localises to the secreted. The chain is Interferon omega-1 (IFNW1) from Bos taurus (Bovine).